The primary structure comprises 260 residues: uncharacterized protein (260 aa).

This sequence belongs to the methyltransferase superfamily.

The protein resides in the cytoplasm. The protein localises to the nucleus. Its function is as follows. Probable methyltransferase. This is an uncharacterized protein from Schizosaccharomyces pombe (strain 972 / ATCC 24843) (Fission yeast).